Here is a 62-residue protein sequence, read N- to C-terminus: Photosystem II reaction center protein Z (62 aa).

Helical transmembrane passes span 8–28 (ALAALVFFSFVMVIGVPFAYA) and 41–61 (WVGSGIWTILVIVVAVLNFFV).

It belongs to the PsbZ family. As to quaternary structure, PSII is composed of 1 copy each of membrane proteins PsbA, PsbB, PsbC, PsbD, PsbE, PsbF, PsbH, PsbI, PsbJ, PsbK, PsbL, PsbM, PsbT, PsbX, PsbY, PsbZ, Psb30/Ycf12, peripheral proteins PsbO, CyanoQ (PsbQ), PsbU, PsbV and a large number of cofactors. It forms dimeric complexes.

The protein resides in the cellular thylakoid membrane. May control the interaction of photosystem II (PSII) cores with the light-harvesting antenna, regulates electron flow through the 2 photosystem reaction centers. PSII is a light-driven water plastoquinone oxidoreductase, using light energy to abstract electrons from H(2)O, generating a proton gradient subsequently used for ATP formation. The polypeptide is Photosystem II reaction center protein Z (Gloeothece citriformis (strain PCC 7424) (Cyanothece sp. (strain PCC 7424))).